The following is a 370-amino-acid chain: DNA replication and repair protein RecF (370 aa).

30 to 37 (GENAQGKT) serves as a coordination point for ATP.

It belongs to the RecF family.

It is found in the cytoplasm. Its function is as follows. The RecF protein is involved in DNA metabolism; it is required for DNA replication and normal SOS inducibility. RecF binds preferentially to single-stranded, linear DNA. It also seems to bind ATP. This is DNA replication and repair protein RecF from Staphylococcus carnosus (strain TM300).